Reading from the N-terminus, the 308-residue chain is tRNA uridine(34) hydroxylase (308 aa).

The Rhodanese domain occupies 129–223 (QEKDTLILDA…YGKHPETQGA (95 aa)). C183 functions as the Cysteine persulfide intermediate in the catalytic mechanism.

This sequence belongs to the TrhO family.

It carries out the reaction uridine(34) in tRNA + AH2 + O2 = 5-hydroxyuridine(34) in tRNA + A + H2O. Catalyzes oxygen-dependent 5-hydroxyuridine (ho5U) modification at position 34 in tRNAs. This chain is tRNA uridine(34) hydroxylase, found in Onion yellows phytoplasma (strain OY-M).